Consider the following 199-residue polypeptide: Large ribosomal subunit protein bL25 (199 aa).

This sequence belongs to the bacterial ribosomal protein bL25 family. CTC subfamily. Part of the 50S ribosomal subunit; part of the 5S rRNA/L5/L18/L25 subcomplex. Contacts the 5S rRNA. Binds to the 5S rRNA independently of L5 and L18.

Functionally, this is one of the proteins that binds to the 5S RNA in the ribosome where it forms part of the central protuberance. The protein is Large ribosomal subunit protein bL25 of Caldanaerobacter subterraneus subsp. tengcongensis (strain DSM 15242 / JCM 11007 / NBRC 100824 / MB4) (Thermoanaerobacter tengcongensis).